The primary structure comprises 298 residues: Proline-rich protein 32 (298 aa).

A disordered region spans residues Cys-36–Arg-56.

This is Proline-rich protein 32 (PRR32) from Homo sapiens (Human).